The sequence spans 146 residues: uncharacterized protein (146 aa).

Residues aspartate 67 to valine 93 are disordered. Residues serine 77 to proline 92 are compositionally biased toward low complexity.

This is an uncharacterized protein from Caenorhabditis elegans.